The chain runs to 216 residues: Octanoyltransferase (216 aa).

Residues 32-211 (QEASEMLWFL…RFPYFLEALQ (180 aa)) form the BPL/LPL catalytic domain. Substrate contacts are provided by residues 71 to 78 (RGGRYTYH), 142 to 144 (AIG), and 155 to 157 (GFS). Cys-173 acts as the Acyl-thioester intermediate in catalysis.

Belongs to the LipB family.

It localises to the cytoplasm. The catalysed reaction is octanoyl-[ACP] + L-lysyl-[protein] = N(6)-octanoyl-L-lysyl-[protein] + holo-[ACP] + H(+). It functions in the pathway protein modification; protein lipoylation via endogenous pathway; protein N(6)-(lipoyl)lysine from octanoyl-[acyl-carrier-protein]: step 1/2. Catalyzes the transfer of endogenously produced octanoic acid from octanoyl-acyl-carrier-protein onto the lipoyl domains of lipoate-dependent enzymes. Lipoyl-ACP can also act as a substrate although octanoyl-ACP is likely to be the physiological substrate. In Zymomonas mobilis subsp. mobilis (strain ATCC 31821 / ZM4 / CP4), this protein is Octanoyltransferase.